A 250-amino-acid polypeptide reads, in one-letter code: 23S rRNA (guanine(2535)-N(1))-methyltransferase (250 aa).

It carries out the reaction guanosine(2535) in 23S rRNA + S-adenosyl-L-methionine = N(1)-methylguanosine(2535) in 23S rRNA + S-adenosyl-L-homocysteine + H(+). In terms of biological role, specifically methylates the guanine-2535 in 23S ribosomal RNA. Confers resistance to antibiotic avilamycin, an orthosomycin antibiotic. This is 23S rRNA (guanine(2535)-N(1))-methyltransferase (aviRa) from Streptomyces viridochromogenes.